A 308-amino-acid chain; its full sequence is MRIFENANYPFVQHRKKAYVFSGVLILLSLVSLVTRGLELGIDFKGGMEFIISGAREPGATAIREALTPVLGTEPEVKTYGAEDILIRVAAEGDINEVQRRIVETIRQRFPETQPEVVQTNIVGPRFAEDLKRGAIYSILGALLVIFVYILIRFEWRFSLGAVVALFHDVLITLGLFSLLHGWLPFSLEIDQTIIAAFLTIVGYSLNDTVVVFDRIREYMNIFKTKPFEEVVNLSINTTLSRTIITSGTTLLVVVILFIFGGEVLRGFSFALIVGIVIGTYSSIFVASPVVIELRARAAARRRLATAR.

Helical transmembrane passes span 18–38 (AYVF…TRGL), 134–154 (GAIY…LIRF), 160–180 (LGAV…FSLL), 193–213 (TIIA…VVVF), 244–264 (IITS…GGEV), and 272–292 (LIVG…PVVI).

This sequence belongs to the SecD/SecF family. SecF subfamily. Forms a complex with SecD. Part of the essential Sec protein translocation apparatus which comprises SecA, SecYEG and auxiliary proteins SecDF. Other proteins may also be involved.

The protein resides in the cell inner membrane. Its function is as follows. Part of the Sec protein translocase complex. Interacts with the SecYEG preprotein conducting channel. SecDF uses the proton motive force (PMF) to complete protein translocation after the ATP-dependent function of SecA. The polypeptide is Protein translocase subunit SecF (Rhodothermus marinus (strain ATCC 43812 / DSM 4252 / R-10) (Rhodothermus obamensis)).